Reading from the N-terminus, the 360-residue chain is Phospho-N-acetylmuramoyl-pentapeptide-transferase (360 aa).

Helical transmembrane passes span 27 to 47, 74 to 94, 99 to 119, 135 to 155, 165 to 185, 199 to 219, 236 to 256, 263 to 283, 288 to 308, and 337 to 357; these read GATA…IAAL, TMGG…WANL, VWVV…DDYL, LLLE…LGTP, INGF…FVIV, GLAI…AYLA, AGEL…FLWF, IFMG…VAVA, IVLA…IVQV, and QVVV…LSTL.

This sequence belongs to the glycosyltransferase 4 family. MraY subfamily. The cofactor is Mg(2+).

The protein resides in the cell inner membrane. The catalysed reaction is UDP-N-acetyl-alpha-D-muramoyl-L-alanyl-gamma-D-glutamyl-meso-2,6-diaminopimeloyl-D-alanyl-D-alanine + di-trans,octa-cis-undecaprenyl phosphate = di-trans,octa-cis-undecaprenyl diphospho-N-acetyl-alpha-D-muramoyl-L-alanyl-D-glutamyl-meso-2,6-diaminopimeloyl-D-alanyl-D-alanine + UMP. It functions in the pathway cell wall biogenesis; peptidoglycan biosynthesis. In terms of biological role, catalyzes the initial step of the lipid cycle reactions in the biosynthesis of the cell wall peptidoglycan: transfers peptidoglycan precursor phospho-MurNAc-pentapeptide from UDP-MurNAc-pentapeptide onto the lipid carrier undecaprenyl phosphate, yielding undecaprenyl-pyrophosphoryl-MurNAc-pentapeptide, known as lipid I. The protein is Phospho-N-acetylmuramoyl-pentapeptide-transferase of Methylocella silvestris (strain DSM 15510 / CIP 108128 / LMG 27833 / NCIMB 13906 / BL2).